The sequence spans 119 residues: Ribonuclease P protein component (119 aa).

It belongs to the RnpA family. As to quaternary structure, consists of a catalytic RNA component (M1 or rnpB) and a protein subunit.

The catalysed reaction is Endonucleolytic cleavage of RNA, removing 5'-extranucleotides from tRNA precursor.. RNaseP catalyzes the removal of the 5'-leader sequence from pre-tRNA to produce the mature 5'-terminus. It can also cleave other RNA substrates such as 4.5S RNA. The protein component plays an auxiliary but essential role in vivo by binding to the 5'-leader sequence and broadening the substrate specificity of the ribozyme. In Histophilus somni (strain 129Pt) (Haemophilus somnus), this protein is Ribonuclease P protein component.